Reading from the N-terminus, the 120-residue chain is Large ribosomal subunit protein eL18 (120 aa).

This sequence belongs to the eukaryotic ribosomal protein eL18 family.

The chain is Large ribosomal subunit protein eL18 from Thermococcus onnurineus (strain NA1).